The sequence spans 303 residues: MRFKGLDLNLLVALDALMTERKLTAAARSINLSQPAMSAAISRLRDYFRDDLFIMQRRELVPTPRAEALAPAVREALLHIQLSVIAWDPINPAESDRRFRIILSDFMALVFFDKIILRLAREAPGVSFELLPLDDDPEELLRRGDVDFLILPDLFMSGAHPKARLFEERLVCVGCPTNEQLQGQLSLEQYMSMGHVAAKFGRGLKPSVEQWLLMQHGLKRRIELVVPGFNLIPPLLSGTNRIATIPLRLVKHYERTIPLRIIEHPLPLVSFTEAVQWPALHNTDPGNIWMREIMIQEALRIGI.

One can recognise an HTH lysR-type domain in the interval 6–63; it reads LDLNLLVALDALMTERKLTAAARSINLSQPAMSAAISRLRDYFRDDLFIMQRRELVPT. The segment at residues 23–42 is a DNA-binding region (H-T-H motif); the sequence is LTAAARSINLSQPAMSAAIS.

It belongs to the LysR transcriptional regulatory family.

Functionally, nodD regulates the expression of the nodABCFE genes which encode other nodulation proteins. NodD is also a negative regulator of its own expression. Binds flavonoids as inducers. In Rhizobium leguminosarum bv. viciae, this protein is Nodulation protein D (nodD).